The following is a 390-amino-acid chain: Copper-containing nitrite reductase (390 aa).

An N-terminal signal peptide occupies residues methionine 1–alanine 18. Cysteine 19 is lipidated: N-palmitoyl cysteine. The S-diacylglycerol cysteine moiety is linked to residue cysteine 19. The disordered stretch occupies residues glutamate 30–serine 51. 2 Plastocyanin-like domains span residues tryptophan 101–glutamate 195 and glycine 245–glutamate 346. Cu cation is bound by residues histidine 134, histidine 139, histidine 174, cysteine 175, histidine 183, and methionine 188. Histidine 139 provides a ligand contact to substrate. Histidine 280 is a binding site for substrate. Histidine 329 contacts Cu cation. The interval glycine 367–tyrosine 390 is disordered. Over residues alanine 368–tyrosine 390 the composition is skewed to low complexity. 3 tandem repeats follow at residues alanine 371–proline 375, alanine 376–proline 380, and alanine 381–serine 385. Residues alanine 371–serine 385 form a 3 X 5 AA tandem repeats of A-A-S-A-P region.

This sequence belongs to the multicopper oxidase family. In terms of assembly, homotrimer. The cofactor is Cu(+). Cu(2+) serves as cofactor.

It localises to the cell outer membrane. The enzyme catalyses nitric oxide + Fe(III)-[cytochrome c] + H2O = Fe(II)-[cytochrome c] + nitrite + 2 H(+). Its function is as follows. Catalyzes the reduction of nitrite to nitric oxide (NO). It could be essential for growth and survival in oxygen-depleted environments. This chain is Copper-containing nitrite reductase (aniA), found in Neisseria meningitidis serogroup B (strain ATCC BAA-335 / MC58).